Reading from the N-terminus, the 325-residue chain is Mitochondrial thiamine pyrophosphate carrier 1 (325 aa).

Solcar repeat units lie at residues 12–111 (GSRL…TTLL), 122–209 (PPSA…LRPH), and 216–312 (PFSS…ALKF). The next 6 helical transmembrane spans lie at 17-35 (VTAAGATAGLVARFVIAPL), 92-108 (LLYVCYSAIQFTTYRTT), 127-143 (SFVAGAIGGGTATAATY), 184-200 (VWDRAWAQIIPYMSFFF), 223-239 (VARTMASVMAKSRTFPL), and 287-304 (GLTVSLLKAAPASAVTMW).

Belongs to the mitochondrial carrier (TC 2.A.29) family.

The protein resides in the mitochondrion inner membrane. Functionally, mitochondrial transporter that mediates uptake of thiamine pyrophosphate (ThPP) into mitochondria. The chain is Mitochondrial thiamine pyrophosphate carrier 1 (TPC1) from Chaetomium globosum (strain ATCC 6205 / CBS 148.51 / DSM 1962 / NBRC 6347 / NRRL 1970) (Soil fungus).